Here is a 1060-residue protein sequence, read N- to C-terminus: RNA-binding protein 27 (1060 aa).

3 disordered regions span residues Pro80–Trp143, Tyr160–Arg278, and Pro319–Leu416. Basic and acidic residues-rich tracts occupy residues Val84 to Val102 and Ser124 to Trp143. Residues Gly165–Gly185 show a composition bias toward basic residues. The span at Arg186–Leu211 shows a compositional bias: basic and acidic residues. Low complexity-rich tracts occupy residues Ser225 to Ser235 and Ser255 to Ser268. The C3H1-type zinc-finger motif lies at Pro273–Asp301. Composition is skewed to pro residues over residues Pro319 to Gly356 and Gln371 to Pro384. Residues Gln387 to Val402 are compositionally biased toward polar residues. Position 447 is a phosphothreonine (Thr447). Arg455 carries the post-translational modification Omega-N-methylarginine. Residues Leu572–Lys594 are disordered. Positions Thr600–Glu674 constitute an RRM domain. Positions His754–Glu775 are disordered. Polar residues predominate over residues Ala755–Gly770. Residues Val810 to Val887 are a coiled coil. Ser928 bears the Phosphoserine mark. The disordered stretch occupies residues Gly943–Gly982. A phosphoserine mark is found at Ser1012 and Ser1020. Positions His1014–Arg1060 are disordered. Composition is skewed to acidic residues over residues Glu1024 to Thr1037 and Asp1044 to Tyr1053.

The protein localises to the cytoplasm. The protein resides in the nucleus speckle. Its function is as follows. May be involved in the turnover of nuclear polyadenylated (pA+) RNA. This Mus musculus (Mouse) protein is RNA-binding protein 27.